A 161-amino-acid polypeptide reads, in one-letter code: Fatty acid-binding protein homolog 2 (161 aa).

The first 19 residues, 1-19, serve as a signal peptide directing secretion; it reads MSSKFLILLAFCGATLVAA.

Belongs to the calycin superfamily. Fatty-acid binding protein (FABP) family.

The protein localises to the secreted. In terms of biological role, may play a role in sequestering potentially toxic fatty acids and their peroxidation products, or it may be involved in the maintenance of the impermeable lipid layer of the eggshell. The chain is Fatty acid-binding protein homolog 2 (lbp-2) from Caenorhabditis elegans.